The chain runs to 159 residues: uncharacterized protein (159 aa).

The N-acetyltransferase domain occupies 7–151 (LLINYKTLEE…NPLIWEPAHI (145 aa)).

This is an uncharacterized protein from Bacillus pumilus (strain SAFR-032).